Consider the following 610-residue polypeptide: Isocitrate dehydrogenase kinase/phosphatase (610 aa).

ATP-binding positions include alanine 359 to threonine 365 and lysine 380. Aspartate 419 is a catalytic residue.

Belongs to the AceK family.

It is found in the cytoplasm. It carries out the reaction L-seryl-[isocitrate dehydrogenase] + ATP = O-phospho-L-seryl-[isocitrate dehydrogenase] + ADP + H(+). Bifunctional enzyme which can phosphorylate or dephosphorylate isocitrate dehydrogenase (IDH) on a specific serine residue. This is a regulatory mechanism which enables bacteria to bypass the Krebs cycle via the glyoxylate shunt in response to the source of carbon. When bacteria are grown on glucose, IDH is fully active and unphosphorylated, but when grown on acetate or ethanol, the activity of IDH declines drastically concomitant with its phosphorylation. In Rhodopseudomonas palustris (strain ATCC BAA-98 / CGA009), this protein is Isocitrate dehydrogenase kinase/phosphatase.